The primary structure comprises 976 residues: Chloride channel protein 1 (976 aa).

Topologically, residues 1 to 118 (MQPSQSLRRG…VVRRKLGEDW (118 aa)) are cytoplasmic. Residues 71–92 (DKEQDTGMSKKMGSSESMDSKD) form a disordered region. Over residues 77-87 (GMSKKMGSSES) the composition is skewed to low complexity. The chain crosses the membrane as a helical span at residues 119-150 (IFLVLLGLLMALVSWSMDYVSAKSLQAYKWSY). Residues 151–158 (YQMQPNLP) are Extracellular-facing. Residues 159 to 179 (LQYLVWVTFPLTLILFSAVFC) form a helical membrane-spanning segment. Residues 180 to 183 (HLIS) lie on the Cytoplasmic side of the membrane. Positions 184-189 (PQAVGS) form an intramembrane region, note=Loop between two helices. The Selectivity filter part_1 motif lies at 188 to 192 (GSGIP). Residue serine 189 participates in chloride binding. Positions 190–195 (GIPEMK) form an intramembrane region, helical. The Cytoplasmic segment spans residues 196–208 (TILRGVILKEYLT). The segment at residues 209–224 (LKAFVAKVVALTAGLG) is an intramembrane region (helical). Residues 225–230 (SGIPVG) constitute an intramembrane region (note=Loop between two helices). The Selectivity filter part_2 motif lies at 230–234 (GKEGP). The helical intramembrane region spans 231 to 246 (KEGPFVHIASICAAVL). Topologically, residues 247–268 (SKFMSMFCGVYEQPYYYTDMLT) are cytoplasmic. 2 intramembrane regions (helical) span residues 269-280 (VGCAVGVGCCFG) and 281-290 (TPLGGVLFSI). The Cytoplasmic segment spans residues 291 to 301 (EVTSTYFAVRN). Residues 302–321 (YWRGFFAATFSAFVFRVLAV) form a helical membrane-spanning segment. Over 322 to 347 (WNKDAVTITALFRTNFRMDFPFDLQE) the chain is Extracellular. The chain crosses the membrane as a helical span at residues 348–376 (LPAFAIIGICCGFLGAVFVYLHRQVMLGV). The Cytoplasmic segment spans residues 377-390 (RKHKALSQFLAKHR). A helical transmembrane segment spans residues 391–408 (LLYPGIVTFIIASFTFPP). Over 409-414 (GIGQFM) the chain is Extracellular. The note=Loop between two helices intramembrane region spans 415 to 418 (AGEL). Positions 419-426 (MPREAIST) form an intramembrane region, helical. The Extracellular segment spans residues 427 to 457 (LFDNNTWVKHVGDPESLGRSAVWIHPRVNVI). The segment at residues 458–475 (IIIFLFFIMKFWMSIVAT) is an intramembrane region (helical). An intramembrane region (note=Loop between two helices) is located at residues 476 to 482 (TMPIPCG). The Selectivity filter part_3 motif lies at 482-486 (GGFMP). Positions 483–498 (GFMPVFVLGAAFGRLV) form an intramembrane region, helical. A chloride-binding site is contributed by phenylalanine 484. The Extracellular portion of the chain corresponds to 499–521 (GEIMAMLFPDGILFDDIIYKILP). Positions 522–538 (GGYAVIGAAALTGAVSH) form an intramembrane region, helical. The segment at residues 539 to 540 (TV) is an intramembrane region (note=Loop between two helices). An intramembrane region (helical) is located at residues 541–554 (STAVICFELTGQIA). Topologically, residues 555–557 (HIL) are extracellular. Positions 558–571 (PMMVAVILANMVAQ) form an intramembrane region, helical. Residues 572–575 (SLQP) constitute an intramembrane region (note=Loop between two helices). Positions 576 to 578 (SLY) form an intramembrane region, helical. Tyrosine 578 contributes to the chloride binding site. Over 579–976 (DSIIQVKKLP…DEEDEDELIL (398 aa)) the chain is Cytoplasmic. One can recognise a CBS 1 domain in the interval 609 to 668 (MVRDVKFVSATCTYGELRTLLQTTTVKTLPLVDSKDSMILLGSVERSELQSLLQRHLGPE). A disordered region spans residues 707–759 (DEDEDEDLSGKPELPPLPPPHPLPSAPLSSEESNGPLPSHKQQPEAPEPADQR). The segment covering 719-731 (ELPPLPPPHPLPS) has biased composition (pro residues). Residues 816-871 (IDQSPFQLVEQTSLHKTHTLFSLLGLHLAYVTSMGKLRGVLALEELQKAIEGHTKS) form the CBS 2 domain. Residues 872–976 (GVQLRPPLAS…DEEDEDELIL (105 aa)) are disordered. Serine 881 carries the post-translational modification Phosphoserine. Positions 914–925 (SPEPPAPSPSPA) are enriched in pro residues. Acidic residues-rich tracts occupy residues 938–955 (ELEELELGESPGLEEELA) and 967–976 (DEEDEDELIL).

Belongs to the chloride channel (TC 2.A.49) family. ClC-1/CLCN1 subfamily. In terms of assembly, homodimer.

The protein resides in the cell membrane. Its subcellular location is the sarcolemma. It is found in the T-tubule. The catalysed reaction is chloride(in) = chloride(out). The enzyme catalyses thiocyanate(in) = thiocyanate(out). It carries out the reaction bromide(in) = bromide(out). It catalyses the reaction nitrate(in) = nitrate(out). The catalysed reaction is iodide(out) = iodide(in). Modulated by membrane voltage with depolarization favouring channel opening and hyperpolarization favouring channel closure. Inhibited by acidic pH and ATP binding due to a shift of voltage dependence of common gating to more positive voltages. Inhibited by 9-anthracene-carboxylic. Voltage-gated chloride channel involved in skeletal muscle excitability. Generates most of the plasma membrane chloride conductance in skeletal muscle fibers, stabilizes the resting membrane potential and contributes to the repolarization phase during action potential firing. Forms a homodimeric channel where each subunit has its own ion conduction pathway. Conducts double-barreled currents controlled by two types of gates, two fast glutamate gates that control each subunit independently and a slow common gate that opens and shuts off both subunits simultaneously. Has a significant open probability at muscle resting potential and is further activated upon membrane depolarization. Permeable to small monovalent anions with ion selectivity for chloride &gt; thiocyanate &gt; bromide &gt; nitrate &gt; iodide. The protein is Chloride channel protein 1 (CLCN1) of Canis lupus familiaris (Dog).